The sequence spans 864 residues: Leucine--tRNA ligase (864 aa).

Positions 42-52 (PYPSGKLHMGH) match the 'HIGH' region motif. Residues 624–628 (KMSKS) carry the 'KMSKS' region motif. Residue lysine 627 participates in ATP binding.

Belongs to the class-I aminoacyl-tRNA synthetase family.

It is found in the cytoplasm. The enzyme catalyses tRNA(Leu) + L-leucine + ATP = L-leucyl-tRNA(Leu) + AMP + diphosphate. The sequence is that of Leucine--tRNA ligase from Burkholderia mallei (strain NCTC 10229).